The following is a 269-amino-acid chain: Phosphate import ATP-binding protein PstB 1 (269 aa).

The 240-residue stretch at 25 to 264 folds into the ABC transporter domain; the sequence is LSTEDLHVFY…PQVDLTNDYI (240 aa). 57–64 contributes to the ATP binding site; sequence GPSGSGKS.

The protein belongs to the ABC transporter superfamily. Phosphate importer (TC 3.A.1.7) family. In terms of assembly, the complex is composed of two ATP-binding proteins (PstB), two transmembrane proteins (PstC and PstA) and a solute-binding protein (PstS).

Its subcellular location is the cell membrane. The catalysed reaction is phosphate(out) + ATP + H2O = ADP + 2 phosphate(in) + H(+). Its function is as follows. Part of the ABC transporter complex PstSACB involved in phosphate import. Responsible for energy coupling to the transport system. In Lactiplantibacillus plantarum (strain ATCC BAA-793 / NCIMB 8826 / WCFS1) (Lactobacillus plantarum), this protein is Phosphate import ATP-binding protein PstB 1.